The sequence spans 175 residues: Cyclic pyranopterin monophosphate synthase (175 aa).

Substrate-binding positions include 78-80 (LCH) and 125-126 (ME). Asp140 is an active-site residue.

Belongs to the MoaC family. As to quaternary structure, homohexamer; trimer of dimers.

It carries out the reaction (8S)-3',8-cyclo-7,8-dihydroguanosine 5'-triphosphate = cyclic pyranopterin phosphate + diphosphate. It participates in cofactor biosynthesis; molybdopterin biosynthesis. Functionally, catalyzes the conversion of (8S)-3',8-cyclo-7,8-dihydroguanosine 5'-triphosphate to cyclic pyranopterin monophosphate (cPMP). The protein is Cyclic pyranopterin monophosphate synthase of Rhodopirellula baltica (strain DSM 10527 / NCIMB 13988 / SH1).